The primary structure comprises 269 residues: Chymotrypsin-like elastase family member 2A (269 aa).

The N-terminal stretch at 1-16 is a signal peptide; that stretch reads MIRALLLSTLVAGALS. A propeptide spans 17 to 28 (activation peptide); sequence CGLPANLPQLPR. Residues 29–267 form the Peptidase S1 domain; the sequence is VVGGEDARPN…YIDWINSVIA (239 aa). A disulfide bridge links C58 with C74. Active-site charge relay system residues include H73 and D121. 3 disulfide bridges follow: C155/C222, C186/C202, and C212/C243. Catalysis depends on S216, which acts as the Charge relay system.

It belongs to the peptidase S1 family. Elastase subfamily. Interacts with CPA1. Interacts with SERPINA1. Pancreas.

Its subcellular location is the secreted. It catalyses the reaction Preferential cleavage: Leu-|-Xaa, Met-|-Xaa and Phe-|-Xaa. Hydrolyzes elastin.. Elastase that enhances insulin signaling and might have a physiologic role in cellular glucose metabolism. Circulates in plasma and reduces platelet hyperactivation, triggers both insulin secretion and degradation, and increases insulin sensitivity. This chain is Chymotrypsin-like elastase family member 2A (CELA2A), found in Sus scrofa (Pig).